The following is a 118-amino-acid chain: MEGQTFKKKERLRLKRNFKNVFEKGGRLIDNNFVIIYVPNTMDYNRIAVIVNRKFGNAVVRNLIKRYIREIYRTNKTFFPLGYDFVFIPRKELSKNFKGIDYSQIKNQILKLVRKLEA.

It belongs to the RnpA family. In terms of assembly, consists of a catalytic RNA component (M1 or rnpB) and a protein subunit.

It catalyses the reaction Endonucleolytic cleavage of RNA, removing 5'-extranucleotides from tRNA precursor.. In terms of biological role, RNaseP catalyzes the removal of the 5'-leader sequence from pre-tRNA to produce the mature 5'-terminus. It can also cleave other RNA substrates such as 4.5S RNA. The protein component plays an auxiliary but essential role in vivo by binding to the 5'-leader sequence and broadening the substrate specificity of the ribozyme. The polypeptide is Ribonuclease P protein component (Petrotoga mobilis (strain DSM 10674 / SJ95)).